Consider the following 146-residue polypeptide: Cyanate hydratase (146 aa).

Residues arginine 87, glutamate 90, and serine 113 contribute to the active site.

Belongs to the cyanase family.

It carries out the reaction cyanate + hydrogencarbonate + 3 H(+) = NH4(+) + 2 CO2. Its function is as follows. Catalyzes the reaction of cyanate with bicarbonate to produce ammonia and carbon dioxide. The sequence is that of Cyanate hydratase from Pseudomonas putida (strain ATCC 700007 / DSM 6899 / JCM 31910 / BCRC 17059 / LMG 24140 / F1).